A 549-amino-acid polypeptide reads, in one-letter code: Probable protein kinase UbiB (549 aa).

Residues 123-501 (DFNETPLASA…QQQAHKSNYL (379 aa)) form the Protein kinase domain. Residues 129-137 (LASASISQV) and Lys152 contribute to the ATP site. The Proton acceptor role is filled by Asp287. 2 helical membrane-spanning segments follow: residues 496–516 (HKSNYLLITSAVLLICGTLLI) and 520–540 (ATLWTPYVCLVSGIILWFVGW).

Belongs to the ABC1 family. UbiB subfamily.

The protein resides in the cell inner membrane. It participates in cofactor biosynthesis; ubiquinone biosynthesis [regulation]. Is probably a protein kinase regulator of UbiI activity which is involved in aerobic coenzyme Q (ubiquinone) biosynthesis. In Shewanella baltica (strain OS185), this protein is Probable protein kinase UbiB.